We begin with the raw amino-acid sequence, 374 residues long: Histidine biosynthesis bifunctional protein HisB (374 aa).

Positions 1-183 are histidinol-phosphatase; sequence MKKKVLFIDR…RVAEFLFAGE (183 aa). The active-site Nucleophile is the D9. Residues D9, D11, and D131 each coordinate Mg(2+). D11 (proton donor) is an active-site residue. The segment at 184–374 is imidazoleglycerol-phosphate dehydratase; the sequence is RRAEIRRTTK…FELPSSKGVL (191 aa).

This sequence in the N-terminal section; belongs to the histidinol-phosphatase family. In the C-terminal section; belongs to the imidazoleglycerol-phosphate dehydratase family. The cofactor is Mg(2+).

It is found in the cytoplasm. It catalyses the reaction D-erythro-1-(imidazol-4-yl)glycerol 3-phosphate = 3-(imidazol-4-yl)-2-oxopropyl phosphate + H2O. It carries out the reaction L-histidinol phosphate + H2O = L-histidinol + phosphate. It functions in the pathway amino-acid biosynthesis; L-histidine biosynthesis; L-histidine from 5-phospho-alpha-D-ribose 1-diphosphate: step 6/9. Its pathway is amino-acid biosynthesis; L-histidine biosynthesis; L-histidine from 5-phospho-alpha-D-ribose 1-diphosphate: step 8/9. The polypeptide is Histidine biosynthesis bifunctional protein HisB (Bacteroides fragilis (strain ATCC 25285 / DSM 2151 / CCUG 4856 / JCM 11019 / LMG 10263 / NCTC 9343 / Onslow / VPI 2553 / EN-2)).